The primary structure comprises 247 residues: Small ribosomal subunit protein uS2 (247 aa).

The protein belongs to the universal ribosomal protein uS2 family.

The sequence is that of Small ribosomal subunit protein uS2 from Pseudomonas syringae pv. syringae (strain B728a).